The sequence spans 287 residues: GPN-loop GTPase 3 (287 aa).

Position 12-17 (12-17 (GAGKST)) interacts with GTP. A Gly-Pro-Asn (GPN)-loop; involved in dimer interface motif is present at residues 69-71 (GPN). 172–175 (SKMD) contributes to the GTP binding site.

It belongs to the GPN-loop GTPase family. Heterodimers with GPN1 or GPN2. Binds to RNA polymerase II (RNAPII).

Small GTPase required for proper nuclear import of RNA polymerase II and III (RNAPII and RNAPIII). May act at an RNAP assembly step prior to nuclear import. The polypeptide is GPN-loop GTPase 3 (Cryptococcus neoformans var. neoformans serotype D (strain B-3501A) (Filobasidiella neoformans)).